The following is a 476-amino-acid chain: Protein transport protein Sec61 subunit alpha (476 aa).

Over 2 to 33 the chain is Cytoplasmic; the sequence is GIKFLEVIKPFCAVLPEIQKPERKIQFREKVL. The helical transmembrane segment at 34–53 threads the bilayer; that stretch reads WTAITLFIFLVCCQIPLFGI. Topologically, residues 54-76 are lumenal; it reads MSSDSADPFYWMRVILASNRGTL. The chain crosses the membrane as a helical span at residues 77–96; it reads MELGISPIVTSGLIMQLLAG. At 97 to 117 the chain is on the cytoplasmic side; the sequence is AKIIEVGDTPKDRALFNGAQK. The helical transmembrane segment at 118 to 138 threads the bilayer; it reads LFGMIITIGQAIVYVMTGMYG. Residues 139 to 144 are Lumenal-facing; it reads DPSEMG. Residues 145–165 form a helical membrane-spanning segment; sequence AGICLLIIIQLFVAGLIVLLL. Residues 166–172 lie on the Cytoplasmic side of the membrane; the sequence is DELLQKG. The helical transmembrane segment at 173–193 threads the bilayer; it reads YGLGSGISLFIATNICETIVW. At 194-240 the chain is on the lumenal side; it reads KAFSPTTVNTGRGTEFEGAIIALFHLLATRTDKVRALREAFYRQNLP. The chain crosses the membrane as a helical span at residues 241 to 261; the sequence is NILNLIATVFVFAVVIYFQGF. Topologically, residues 262–288 are cytoplasmic; sequence RVDLPIKSARYRGQYNTYPIKLFYTSN. A helical transmembrane segment spans residues 289–309; sequence IPIILQSALVSNLYVISQMLS. Over 310–354 the chain is Lumenal; it reads TRFSGNFLVNLLGTWSDATSGGPARAYPVAGLCYYLSPPESFGSV. A helical transmembrane segment spans residues 355–375; sequence LDDPVHAAIYIVFMLGSCAFF. Over 376–420 the chain is Cytoplasmic; the sequence is SKTWIEVSGSSAKDVAKQLKEQQMVMRGHRETSMVHELNRYIPTA. Residues 421–441 traverse the membrane as a helical segment; sequence AAFGGLCIGGLSVMADFLGAI. The Lumenal segment spans residues 442-445; the sequence is GSGT. A helical transmembrane segment spans residues 446–462; the sequence is GILLAVTIIYQYFEIFV. The Cytoplasmic portion of the chain corresponds to 463 to 476; that stretch reads KEQSEMGSMGALLF.

It belongs to the SecY/SEC61-alpha family. The SEC61 channel-forming translocon complex consists of channel-forming core components SEC61A1, SEC61B and SEC61G and different auxiliary components such as SEC62 and SEC63. The SEC61 channel associates with the multi-pass translocon (MPT) complex.

Its subcellular location is the endoplasmic reticulum membrane. Component of SEC61 channel-forming translocon complex that mediates transport of signal peptide-containing precursor polypeptides across the endoplasmic reticulum (ER). Forms a ribosome receptor and a gated pore in the ER membrane, both functions required for cotranslational translocation of nascent polypeptides. May cooperate with auxiliary protein SEC62, SEC63 and HSPA5/BiP to enable post-translational transport of small presecretory proteins. The SEC61 channel is also involved in ER membrane insertion of transmembrane proteins: it mediates membrane insertion of the first few transmembrane segments of proteins, while insertion of subsequent transmembrane regions of multi-pass membrane proteins is mediated by the multi-pass translocon (MPT) complex. This is Protein transport protein Sec61 subunit alpha (sec61a) from Dissostichus mawsoni (Antarctic cod).